A 127-amino-acid chain; its full sequence is Large ribosomal subunit protein bL12 (127 aa).

This sequence belongs to the bacterial ribosomal protein bL12 family. As to quaternary structure, homodimer. Part of the ribosomal stalk of the 50S ribosomal subunit. Forms a multimeric L10(L12)X complex, where L10 forms an elongated spine to which 2 to 4 L12 dimers bind in a sequential fashion. Binds GTP-bound translation factors.

In terms of biological role, forms part of the ribosomal stalk which helps the ribosome interact with GTP-bound translation factors. Is thus essential for accurate translation. This is Large ribosomal subunit protein bL12 from Carboxydothermus hydrogenoformans (strain ATCC BAA-161 / DSM 6008 / Z-2901).